The sequence spans 144 residues: Large ribosomal subunit protein uL15 (144 aa).

Residues 1-51 are disordered; it reads MRLNTIKPGAGSKSAGKRVGRGIGSGLGKTCGRGHKGQKSRAGGFHKVGFE. Gly residues predominate over residues 21–31; that stretch reads RGIGSGLGKTC.

This sequence belongs to the universal ribosomal protein uL15 family. As to quaternary structure, part of the 50S ribosomal subunit.

Its function is as follows. Binds to the 23S rRNA. The sequence is that of Large ribosomal subunit protein uL15 from Azoarcus sp. (strain BH72).